The sequence spans 424 residues: MGITIVLGSQWGDEGKGKITDMLSQQATLCCRAAGGHNAGHTIVHENITYDFHILPSGLVSPSCVNLIGAGTVVHVPSFFKELASLEEKGLKDAGKRIFISDRAHVCFDLHSIVDGLEEAKLGGRKVGTTGKGIGPCYSDKAARRGVRIGEVLDEAVFERKLRSLHAGYTARFGELQYDVEEEIGRFKDYRKRLVPYIVDQLAFFKQYKDSPNTLVEGANALMLDLDHGTYPYVTSSSTGLGGAVQALSLNPTSITSVIGVVKAYTTRVGSGPFPSEQLNEYGDKLQSVGREFGVTTGRRRRCGWFDLVLCRYSQAINHYTALNLTKLDILDDFDEIKVAVAYVLPDGTRLTDTYPADPEVLEKVKVEYVTLPGWKSNTMGVKKYEDLPANARAYIEYIERELGGVPIKWIGTGPARDHMICRE.

GTP is bound by residues 12-18 (GDEGKGK) and 40-42 (GHT). Asp-13 (proton acceptor) is an active-site residue. 2 residues coordinate Mg(2+): Asp-13 and Gly-40. IMP is bound by residues 13 to 16 (DEGK), 38 to 41 (NAGH), Thr-130, Arg-144, Asn-220, Thr-235, and Arg-299. The active-site Proton donor is His-41. 295–301 (VTTGRRR) contributes to the substrate binding site. Residues Arg-301, 327-329 (KLD), and 412-414 (GTG) contribute to the GTP site.

The protein belongs to the adenylosuccinate synthetase family. In terms of assembly, homodimer. Mg(2+) serves as cofactor.

The protein localises to the cytoplasm. It catalyses the reaction IMP + L-aspartate + GTP = N(6)-(1,2-dicarboxyethyl)-AMP + GDP + phosphate + 2 H(+). The protein operates within purine metabolism; AMP biosynthesis via de novo pathway; AMP from IMP: step 1/2. Plays an important role in the de novo pathway and in the salvage pathway of purine nucleotide biosynthesis. Catalyzes the first committed step in the biosynthesis of AMP from IMP. This is Adenylosuccinate synthetase from Aspergillus fumigatus (strain CBS 144.89 / FGSC A1163 / CEA10) (Neosartorya fumigata).